The following is a 109-amino-acid chain: Large ribosomal subunit protein uL1 (109 aa).

Belongs to the universal ribosomal protein uL1 family. As to quaternary structure, part of the 50S ribosomal subunit.

In terms of biological role, binds directly to 23S rRNA. The L1 stalk is quite mobile in the ribosome, and is involved in E site tRNA release. Functionally, protein L1 is also a translational repressor protein, it controls the translation of the L11 operon by binding to its mRNA. This chain is Large ribosomal subunit protein uL1 (rplA), found in Aquifex pyrophilus.